Here is a 176-residue protein sequence, read N- to C-terminus: Translation initiation factor IF-3 (176 aa).

The protein belongs to the IF-3 family. In terms of assembly, monomer.

It is found in the cytoplasm. IF-3 binds to the 30S ribosomal subunit and shifts the equilibrium between 70S ribosomes and their 50S and 30S subunits in favor of the free subunits, thus enhancing the availability of 30S subunits on which protein synthesis initiation begins. This chain is Translation initiation factor IF-3, found in Rippkaea orientalis (strain PCC 8801 / RF-1) (Cyanothece sp. (strain PCC 8801)).